The following is a 219-amino-acid chain: Cytidylate kinase (219 aa).

15–23 (GPAASGKGT) lines the ATP pocket.

The protein belongs to the cytidylate kinase family. Type 1 subfamily.

Its subcellular location is the cytoplasm. The enzyme catalyses CMP + ATP = CDP + ADP. The catalysed reaction is dCMP + ATP = dCDP + ADP. This chain is Cytidylate kinase, found in Brucella melitensis biotype 1 (strain ATCC 23456 / CCUG 17765 / NCTC 10094 / 16M).